Here is a 240-residue protein sequence, read N- to C-terminus: Putative outer membrane protein RT0057 (240 aa).

The N-terminal stretch at 1–20 (MLKKLCVILFISSITINSHA) is a signal peptide.

Belongs to the OmpW/AlkL family.

Its subcellular location is the cell outer membrane. This chain is Putative outer membrane protein RT0057, found in Rickettsia typhi (strain ATCC VR-144 / Wilmington).